A 257-amino-acid chain; its full sequence is MSINDKPIGFFDSGVGGISVLKEAFKLLPKEDFLYYGDSKNAPYGTKKVEEVKALTFNATDFLMNKGIKALVVACNTATSVTINDLRENYDIPIIGIEPALKPAVELNKGGKIIIMATPMTLAEKKFANLMDLYKETEDIEPLPCPGLPELIEQGIVSGDVIYNYLKDKFSKYDNEKISSIVLGCTHYPFIEETLKEVTHNKACIIDGSFGTSRELKRQLKNSNMLREENRVGKVTIFNSREDKDIIDLSYKLFNMK.

Substrate-binding positions include D12 to S13 and Y44 to G45. The active-site Proton donor/acceptor is the C75. A substrate-binding site is contributed by N76–T77. The Proton donor/acceptor role is filled by C185. T186 to H187 contributes to the substrate binding site.

This sequence belongs to the aspartate/glutamate racemases family.

The enzyme catalyses L-glutamate = D-glutamate. Its pathway is cell wall biogenesis; peptidoglycan biosynthesis. Functionally, provides the (R)-glutamate required for cell wall biosynthesis. The chain is Glutamate racemase from Clostridium botulinum (strain Langeland / NCTC 10281 / Type F).